We begin with the raw amino-acid sequence, 690 residues long: Peroxidase (690 aa).

An N-terminal signal peptide occupies residues 1-20 (MIRARDLLLLALLGFISSAL). A disulfide bond links cysteine 100 and cysteine 112. Histidine 185 serves as the catalytic Proton acceptor. N-linked (GlcNAc...) asparagine glycosylation occurs at asparagine 310. A disulfide bridge links cysteine 315 with cysteine 324. Histidine 437 contacts heme b. 2 disulfides stabilise this stretch: cysteine 536/cysteine 592 and cysteine 636/cysteine 662.

The protein belongs to the peroxidase family. XPO subfamily. Requires heme b as cofactor.

It localises to the secreted. The enzyme catalyses 2 a phenolic donor + H2O2 = 2 a phenolic radical donor + 2 H2O. Involved in the chorion hardening process, through protein cross-linking mediated by the formation of di- and tri-tyrosine bonds. The polypeptide is Peroxidase (Pxd) (Drosophila melanogaster (Fruit fly)).